The primary structure comprises 653 residues: PAN2-PAN3 deadenylation complex subunit PAN3 (653 aa).

2 disordered regions span residues Met1–Lys21 and His45–Asp128. Residues Asn19–Asn48 form a C3H1-type zinc finger. A compositionally biased stretch (low complexity) spans Ser68–Ser95. Over residues Gly108 to Ser119 the composition is skewed to polar residues. The segment at Gln256–Ser516 is pseudokinase domain. ATP is bound by residues Arg308, Asp357–Thr364, and Ser416–Lys417. Residues Ser517–Phe555 adopt a coiled-coil conformation. Residues Ile556 to His653 form a knob domain region.

The protein belongs to the protein kinase superfamily. PAN3 family. In terms of assembly, homodimer. Forms a heterotrimer with a catalytic subunit pan2 to form the poly(A)-nuclease (PAN) deadenylation complex. Interacts (via PAM-2 motif) with poly(A)-binding protein pab1 (via PABC domain), conferring substrate specificity of the enzyme complex.

Its subcellular location is the cytoplasm. Functionally, regulatory subunit of the poly(A)-nuclease (PAN) deadenylation complex, one of two cytoplasmic mRNA deadenylases involved in mRNA turnover. PAN specifically shortens poly(A) tails of RNA and the activity is stimulated by poly(A)-binding protein pab1. PAN deadenylation is followed by rapid degradation of the shortened mRNA tails by the CCR4-NOT complex. Deadenylated mRNAs are then degraded by two alternative mechanisms, namely exosome-mediated 3'-5' exonucleolytic degradation, or deadenylation-dependent mRNA decaping and subsequent 5'-3' exonucleolytic degradation by xrn1. May also be involved in post-transcriptional maturation of mRNA poly(A) tails. pan3 acts as a positive regulator for PAN activity, recruiting the catalytic subunit pan2 to mRNA via its interaction with RNA and with pab1. This Aspergillus terreus (strain NIH 2624 / FGSC A1156) protein is PAN2-PAN3 deadenylation complex subunit PAN3.